Here is a 211-residue protein sequence, read N- to C-terminus: Small ribosomal subunit protein uS5 (211 aa).

Residues 1–41 (MPGRERRDGGRSADDNKQNDRNERRGGGRRDDRRNQQQDER) are disordered. Positions 44 to 107 (YIERVVTINR…EEARKNFFRV (64 aa)) constitute an S5 DRBM domain.

The protein belongs to the universal ribosomal protein uS5 family. As to quaternary structure, part of the 30S ribosomal subunit. Contacts proteins S4 and S8.

In terms of biological role, with S4 and S12 plays an important role in translational accuracy. Its function is as follows. Located at the back of the 30S subunit body where it stabilizes the conformation of the head with respect to the body. The polypeptide is Small ribosomal subunit protein uS5 (Corynebacterium glutamicum (strain R)).